The primary structure comprises 95 residues: Small ribosomal subunit protein uS17 (95 aa).

It belongs to the universal ribosomal protein uS17 family. As to quaternary structure, part of the 30S ribosomal subunit.

Its function is as follows. One of the primary rRNA binding proteins, it binds specifically to the 5'-end of 16S ribosomal RNA. The polypeptide is Small ribosomal subunit protein uS17 (Mesomycoplasma hyopneumoniae (strain 7448) (Mycoplasma hyopneumoniae)).